Consider the following 360-residue polypeptide: MSDIDQLNSSLLAEIAAANDEAALEAVRVSALGKKGSVSELLKTLGSMTPEERQTRGAAINALKNAVTDAVAERRSVLKVAAVNARLKAETVDVSLPVRSSPAERGRIHPISQIVDEITAIFADMGFSIAEGPDIETDYYNFTALNFPEGHPAREMHDTFFFNPDENGERKVLRTHTSPVQVRTMEAQQPPIRIIIPGKTYRQDSDATHSPMFHQVEGLVIDKKANVANIRWVLEEFCKTFFEVDSVTMRFRPSFFPFTEPSFEVDIQCDRSGPIVKFGEGTDWMEILGCGMVHPNVLRYGGLDPDEYQGFAWGMGLDRIAMLKYGMPDLRDFFNADVRWMTHYGFRPLDMPTLFGGLSA.

Glutamate 260 serves as a coordination point for Mg(2+).

The protein belongs to the class-II aminoacyl-tRNA synthetase family. Phe-tRNA synthetase alpha subunit type 1 subfamily. In terms of assembly, tetramer of two alpha and two beta subunits. Mg(2+) is required as a cofactor.

The protein localises to the cytoplasm. It carries out the reaction tRNA(Phe) + L-phenylalanine + ATP = L-phenylalanyl-tRNA(Phe) + AMP + diphosphate + H(+). This chain is Phenylalanine--tRNA ligase alpha subunit, found in Rhizobium etli (strain ATCC 51251 / DSM 11541 / JCM 21823 / NBRC 15573 / CFN 42).